A 297-amino-acid polypeptide reads, in one-letter code: Pantothenate synthetase (297 aa).

30–37 (MGYLHAGH) lines the ATP pocket. Catalysis depends on H37, which acts as the Proton donor. Q61 is a binding site for (R)-pantoate. Q61 serves as a coordination point for beta-alanine. Position 147–150 (147–150 (GEKD)) interacts with ATP. Q153 serves as a coordination point for (R)-pantoate. ATP-binding positions include V176 and 184-187 (LSSR).

The protein belongs to the pantothenate synthetase family. Homodimer.

The protein resides in the cytoplasm. It carries out the reaction (R)-pantoate + beta-alanine + ATP = (R)-pantothenate + AMP + diphosphate + H(+). The protein operates within cofactor biosynthesis; (R)-pantothenate biosynthesis; (R)-pantothenate from (R)-pantoate and beta-alanine: step 1/1. Its function is as follows. Catalyzes the condensation of pantoate with beta-alanine in an ATP-dependent reaction via a pantoyl-adenylate intermediate. This Rhizobium etli (strain ATCC 51251 / DSM 11541 / JCM 21823 / NBRC 15573 / CFN 42) protein is Pantothenate synthetase.